A 323-amino-acid polypeptide reads, in one-letter code: ComG operon protein 2 (323 aa).

Transmembrane regions (helical) follow at residues 93 to 113 (YPLF…SIII), 143 to 163 (LVII…WLVF), and 296 to 316 (MIYG…LVPM).

Belongs to the GSP F family.

The protein resides in the cell membrane. Its function is as follows. Required for transformation and DNA binding. This is ComG operon protein 2 (comGB) from Bacillus subtilis (strain 168).